A 188-amino-acid chain; its full sequence is Elongation factor P (188 aa).

Lysine 34 is modified (N6-(3,6-diaminohexanoyl)-5-hydroxylysine).

The protein belongs to the elongation factor P family. In terms of processing, is beta-lysylated on the epsilon-amino group of Lys-34 by the combined action of EpmA and EpmB, and then hydroxylated on the C5 position of the same residue by EpmC. Lysylation is critical for the stimulatory effect of EF-P on peptide-bond formation. The lysylation moiety would extend toward the peptidyltransferase center and stabilize the terminal 3-CCA end of the tRNA. The hydroxylation of the C5 position on Lys-34 would allow additional potential stabilizing hydrogen-bond interactions with the P-tRNA.

Its subcellular location is the cytoplasm. Its pathway is protein biosynthesis; polypeptide chain elongation. Involved in peptide bond synthesis. Alleviates ribosome stalling that occurs when 3 or more consecutive Pro residues or the sequence PPG is present in a protein, possibly by augmenting the peptidyl transferase activity of the ribosome. Modification of Lys-34 is required for alleviation. This Shigella boydii serotype 18 (strain CDC 3083-94 / BS512) protein is Elongation factor P.